The following is a 260-amino-acid chain: Zinc import ATP-binding protein ZnuC (260 aa).

The region spanning 18–234 is the ABC transporter domain; it reads IRLQEVAVTF…PEYQKLFGSH (217 aa). An ATP-binding site is contributed by 50 to 57; sequence GNNGAGKT. Residues 241 to 260 form a disordered region; sequence VFPHDHHDHSGPALAGGGRG.

Belongs to the ABC transporter superfamily. Zinc importer (TC 3.A.1.15.5) family. As to quaternary structure, the complex is composed of two ATP-binding proteins (ZnuC), two transmembrane proteins (ZnuB) and a solute-binding protein (ZnuA).

Its subcellular location is the cell inner membrane. The catalysed reaction is Zn(2+)(out) + ATP(in) + H2O(in) = Zn(2+)(in) + ADP(in) + phosphate(in) + H(+)(in). In terms of biological role, part of the ABC transporter complex ZnuABC involved in zinc import. Responsible for energy coupling to the transport system. This Halorhodospira halophila (strain DSM 244 / SL1) (Ectothiorhodospira halophila (strain DSM 244 / SL1)) protein is Zinc import ATP-binding protein ZnuC.